A 200-amino-acid polypeptide reads, in one-letter code: Pyridoxal phosphate homeostasis protein (200 aa).

K11 is modified (N6-(pyridoxal phosphate)lysine).

The protein belongs to the pyridoxal phosphate-binding protein YggS/PROSC family. Monomer.

Functionally, pyridoxal 5'-phosphate (PLP)-binding protein, which is involved in PLP homeostasis. The sequence is that of Pyridoxal phosphate homeostasis protein from Buchnera aphidicola subsp. Acyrthosiphon pisum (strain APS) (Acyrthosiphon pisum symbiotic bacterium).